A 414-amino-acid chain; its full sequence is 3-oxoacyl-[acyl-carrier-protein] synthase 2 (414 aa).

Residues 3 to 411 (KRRVVITGLG…GTNGTLVLSR (409 aa)) enclose the Ketosynthase family 3 (KS3) domain. Residues Cys164, His304, and His341 each act as for beta-ketoacyl synthase activity in the active site.

It belongs to the thiolase-like superfamily. Beta-ketoacyl-ACP synthases family. In terms of assembly, homodimer.

It carries out the reaction a fatty acyl-[ACP] + malonyl-[ACP] + H(+) = a 3-oxoacyl-[ACP] + holo-[ACP] + CO2. The catalysed reaction is (9Z)-hexadecenoyl-[ACP] + malonyl-[ACP] + H(+) = 3-oxo-(11Z)-octadecenoyl-[ACP] + holo-[ACP] + CO2. Its pathway is lipid metabolism; fatty acid biosynthesis. Functionally, involved in the type II fatty acid elongation cycle. Catalyzes the elongation of a wide range of acyl-ACP by the addition of two carbons from malonyl-ACP to an acyl acceptor. Can efficiently catalyze the conversion of palmitoleoyl-ACP (cis-hexadec-9-enoyl-ACP) to cis-vaccenoyl-ACP (cis-octadec-11-enoyl-ACP), an essential step in the thermal regulation of fatty acid composition. The protein is 3-oxoacyl-[acyl-carrier-protein] synthase 2 (fabF) of Coxiella burnetii (strain RSA 493 / Nine Mile phase I).